Consider the following 343-residue polypeptide: Probable dual-specificity RNA methyltransferase RlmN (343 aa).

Glu92 serves as the catalytic Proton acceptor. One can recognise a Radical SAM core domain in the interval 98-328 (YHHGLTACIS…TTVRREMGAD (231 aa)). A disulfide bond links Cys105 and Cys333. Cys112, Cys116, and Cys119 together coordinate [4Fe-4S] cluster. S-adenosyl-L-methionine-binding positions include 159–160 (GE), Ser191, 214–216 (SLH), and Asn290. The active-site S-methylcysteine intermediate is the Cys333.

This sequence belongs to the radical SAM superfamily. RlmN family. Requires [4Fe-4S] cluster as cofactor.

It is found in the cytoplasm. It carries out the reaction adenosine(2503) in 23S rRNA + 2 reduced [2Fe-2S]-[ferredoxin] + 2 S-adenosyl-L-methionine = 2-methyladenosine(2503) in 23S rRNA + 5'-deoxyadenosine + L-methionine + 2 oxidized [2Fe-2S]-[ferredoxin] + S-adenosyl-L-homocysteine. The catalysed reaction is adenosine(37) in tRNA + 2 reduced [2Fe-2S]-[ferredoxin] + 2 S-adenosyl-L-methionine = 2-methyladenosine(37) in tRNA + 5'-deoxyadenosine + L-methionine + 2 oxidized [2Fe-2S]-[ferredoxin] + S-adenosyl-L-homocysteine. Functionally, specifically methylates position 2 of adenine 2503 in 23S rRNA and position 2 of adenine 37 in tRNAs. The polypeptide is Probable dual-specificity RNA methyltransferase RlmN (Alkaliphilus oremlandii (strain OhILAs) (Clostridium oremlandii (strain OhILAs))).